The sequence spans 171 residues: Peptide methionine sulfoxide reductase MsrA (171 aa).

Cys13 is a catalytic residue.

This sequence belongs to the MsrA Met sulfoxide reductase family.

It catalyses the reaction L-methionyl-[protein] + [thioredoxin]-disulfide + H2O = L-methionyl-(S)-S-oxide-[protein] + [thioredoxin]-dithiol. The enzyme catalyses [thioredoxin]-disulfide + L-methionine + H2O = L-methionine (S)-S-oxide + [thioredoxin]-dithiol. In terms of biological role, has an important function as a repair enzyme for proteins that have been inactivated by oxidation. Catalyzes the reversible oxidation-reduction of methionine sulfoxide in proteins to methionine. This Mycobacterium sp. (strain JLS) protein is Peptide methionine sulfoxide reductase MsrA.